The primary structure comprises 233 residues: MVDLHSLPIGSRPSAAIRNNGPDRLVLERLKLRELAEGWPSYRDSCEWENFESIFHPGAHVYTTWSGRVPYQDFITASKAGMDKGAFIMHRCHGTSTDINAEGTRAVTKLKAIITQRFEVDGAEFDVEADCRFCFFFEKVGSRWGAQLVRHWYEKDKMIPANPARFPAVDEERLKGYPPGYRYLAYWQEATMGVKVLLDMPGHRRHVGTPNLEKHDLLYRQAKQWLEGEQIEI.

This sequence belongs to the PEP2 family.

Functionally, may contribute to the ability of the fungus to cause disease on pea plants. This chain is PEP2-like protein NECHADRAFT_97050, found in Fusarium vanettenii (strain ATCC MYA-4622 / CBS 123669 / FGSC 9596 / NRRL 45880 / 77-13-4) (Fusarium solani subsp. pisi).